The sequence spans 244 residues: Probable transcriptional regulatory protein MMOB1910 (244 aa).

The protein belongs to the TACO1 family.

Its subcellular location is the cytoplasm. In Mycoplasma mobile (strain ATCC 43663 / 163K / NCTC 11711) (Mesomycoplasma mobile), this protein is Probable transcriptional regulatory protein MMOB1910.